Reading from the N-terminus, the 442-residue chain is MVQLHNFFFFIIFMVVLCGTAAPVLLKWFVSRDVSTGAPFFNGTIIPILISLFSLLVYLHSRKIIRSMDGAKSGVLVRASRPILLPDIIGRSSSETRARKALFFFVPVLHFCLLESKGDFSYLESFCGVLCLLFFCTFFFLARDRSAKRERARRRKGQTLRPNGNEQRRNDKMRCSGHPHLDLERRVEGFGPLAFPVPPELGGACVGGVPPEIGLEALALPRSRQLMAMAVGHDYYQKVPMKMNISHGGVCICMLGVLLSNTKKIQFTQRLPLGYELHMGKERCCLRGLDHLHGPTFHSICGNLMIYKPSLTNDRLMFEHDESLHADLLLINFPASYKNGKLEHFLHWWMKNRKHNNFWLTMFPEKRYFRERTSTAEVAIHTNLFTDLYALIGTGSSRTGGWYTTIMKLPFIFFIWIGFMLASLGGLPSLLRQLQKDKLRWN.

The next 3 helical transmembrane spans lie at 6–26 (NFFF…PVLL), 39–59 (PFFN…LVYL), and 122–142 (YLES…FFLA). The interval 151 to 175 (RARRRKGQTLRPNGNEQRRNDKMRC) is disordered. Residues 166 to 175 (EQRRNDKMRC) show a composition bias toward basic and acidic residues. The chain crosses the membrane as a helical span at residues 411–431 (FIFFIWIGFMLASLGGLPSLL).

It belongs to the CcmF/CycK/Ccl1/NrfE/CcsA family. Interacts with CCMFN2.

Its subcellular location is the mitochondrion inner membrane. Its function is as follows. Forms a complex with CCMFN1, CCMFN2 and CCMH that performs the assembly of heme with c-type apocytochromes in mitochondria. In Arabidopsis thaliana (Mouse-ear cress), this protein is Cytochrome c biogenesis CcmF C-terminal-like mitochondrial protein (CCMFC).